The following is an 80-amino-acid chain: Adipogenin (80 aa).

A helical membrane pass occupies residues 14-34; the sequence is FSFLVFWFCLPVGLLLLLIIW.

It belongs to the adipogenin family.

It localises to the membrane. The protein localises to the nucleus. Plays a role in stimulating adipocyte differentiation and development. This Homo sapiens (Human) protein is Adipogenin.